A 294-amino-acid polypeptide reads, in one-letter code: Cyclin-dependent kinase 5 homolog (294 aa).

The region spanning Tyr4–Phe286 is the Protein kinase domain. ATP is bound by residues Ile10 to Val18 and Lys33. A Phosphothreonine modification is found at Thr14. At Tyr15 the chain carries Phosphotyrosine. Residue Asp126 is the Proton acceptor of the active site. Position 159 is a phosphoserine (Ser159).

The protein belongs to the protein kinase superfamily. CMGC Ser/Thr protein kinase family. CDC2/CDKX subfamily. In terms of tissue distribution, abundantly expressed in all adult tissues. Lower levels found in larvae and early embryos. Barely detectable in late embryos.

The catalysed reaction is L-seryl-[protein] + ATP = O-phospho-L-seryl-[protein] + ADP + H(+). The enzyme catalyses L-threonyl-[protein] + ATP = O-phospho-L-threonyl-[protein] + ADP + H(+). Functionally, probably involved in the control of the cell cycle. Interacts with D1 and D3-type G1 cyclins. Possible regulator of neuronal differentiation and/or development. The sequence is that of Cyclin-dependent kinase 5 homolog (Cdk5) from Drosophila melanogaster (Fruit fly).